The following is a 455-amino-acid chain: Exodeoxyribonuclease 7 large subunit (455 aa).

Belongs to the XseA family. As to quaternary structure, heterooligomer composed of large and small subunits.

It is found in the cytoplasm. It carries out the reaction Exonucleolytic cleavage in either 5'- to 3'- or 3'- to 5'-direction to yield nucleoside 5'-phosphates.. In terms of biological role, bidirectionally degrades single-stranded DNA into large acid-insoluble oligonucleotides, which are then degraded further into small acid-soluble oligonucleotides. This chain is Exodeoxyribonuclease 7 large subunit, found in Escherichia coli O7:K1 (strain IAI39 / ExPEC).